A 63-amino-acid chain; its full sequence is Large ribosomal subunit protein uL29 (63 aa).

This sequence belongs to the universal ribosomal protein uL29 family.

The sequence is that of Large ribosomal subunit protein uL29 from Vibrio cholerae serotype O1 (strain ATCC 39541 / Classical Ogawa 395 / O395).